Reading from the N-terminus, the 147-residue chain is 3-dehydroquinate dehydratase (147 aa).

Tyr23 acts as the Proton acceptor in catalysis. Substrate-binding residues include Asn74, His80, and Asp87. The active-site Proton donor is His100. Substrate-binding positions include 101 to 102 (LS) and Arg111.

This sequence belongs to the type-II 3-dehydroquinase family. As to quaternary structure, homododecamer.

It carries out the reaction 3-dehydroquinate = 3-dehydroshikimate + H2O. It participates in metabolic intermediate biosynthesis; chorismate biosynthesis; chorismate from D-erythrose 4-phosphate and phosphoenolpyruvate: step 3/7. Its function is as follows. Catalyzes a trans-dehydration via an enolate intermediate. In Clostridium botulinum (strain Okra / Type B1), this protein is 3-dehydroquinate dehydratase.